A 235-amino-acid polypeptide reads, in one-letter code: UPF0758 protein Swol_1642 (235 aa).

An MPN domain is found at 109 to 235; the sequence is IIKSPEDVQE…YCSLKARGLI (127 aa). Residues histidine 184, histidine 186, and aspartate 197 each coordinate Zn(2+). Positions 184-197 match the JAMM motif motif; it reads HNHPSGDPTPSQED.

This sequence belongs to the UPF0758 family.

The chain is UPF0758 protein Swol_1642 from Syntrophomonas wolfei subsp. wolfei (strain DSM 2245B / Goettingen).